We begin with the raw amino-acid sequence, 244 residues long: Carboxy-S-adenosyl-L-methionine synthase (244 aa).

Residues Tyr41, 66–68 (GCS), 91–92 (DN), Asn134, and Arg201 contribute to the S-adenosyl-L-methionine site.

Belongs to the class I-like SAM-binding methyltransferase superfamily. Cx-SAM synthase family. As to quaternary structure, homodimer.

It catalyses the reaction prephenate + S-adenosyl-L-methionine = carboxy-S-adenosyl-L-methionine + 3-phenylpyruvate + H2O. Its function is as follows. Catalyzes the conversion of S-adenosyl-L-methionine (SAM) to carboxy-S-adenosyl-L-methionine (Cx-SAM). The chain is Carboxy-S-adenosyl-L-methionine synthase from Colwellia psychrerythraea (strain 34H / ATCC BAA-681) (Vibrio psychroerythus).